An 81-amino-acid chain; its full sequence is Large ribosomal subunit protein bL31B (81 aa).

This sequence belongs to the bacterial ribosomal protein bL31 family. Type B subfamily. As to quaternary structure, part of the 50S ribosomal subunit.

This chain is Large ribosomal subunit protein bL31B, found in Limosilactobacillus reuteri (strain DSM 20016) (Lactobacillus reuteri).